Here is a 130-residue protein sequence, read N- to C-terminus: Arsenate reductase 2.2 (130 aa).

A Rhodanese domain is found at 18–119 (RDPRIAVVDV…WELSGRPVCR (102 aa)). The active-site Cysteine persulfide intermediate is the Cys70.

It catalyses the reaction [glutaredoxin]-dithiol + arsenate + glutathione + H(+) = glutathionyl-S-S-[glutaredoxin] + arsenite + H2O. Its function is as follows. Possesses arsenate reductase activity in vitro. Catalyzes the reduction of arsenate [As(V)] to arsenite [As(III)]. May play a role in arsenic retention in roots. Possesses phosphatase activity towards p-nitrophenyl phosphate in vitro. The sequence is that of Arsenate reductase 2.2 (ACR2.2) from Oryza sativa subsp. japonica (Rice).